The primary structure comprises 2521 residues: Partially reducing polyketide synthase tpeA (2521 aa).

Residues 7–434 enclose the Ketosynthase family 3 (KS3) domain; it reads DQSIAVIGLS…GSNAHAIIDN (428 aa). Residues 47-66 are disordered; that stretch reads RWNSRRFQDDKNHSQNTSRT. Residues Cys180, His315, and His357 each act as for beta-ketoacyl synthase activity in the active site. The 302-residue stretch at 554–855 folds into the Malonyl-CoA:ACP transacylase (MAT) domain; that stretch reads YVFTGQGAQW…LRGPVTQILQ (302 aa). The segment at 948–1088 is N-terminal hotdog fold; that stretch reads SSFIGLPMPS…GLVTVEFEQL (141 aa). Positions 948–1258 constitute a PKS/mFAS DH domain; that stretch reads SSFIGLPMPS…CVEMPSTAGV (311 aa). The interval 949–1256 is dehydratase (DH) domain; sequence SFIGLPMPSF…LTCVEMPSTA (308 aa). The tract at residues 1100 to 1258 is C-terminal hotdog fold; that stretch reads TTVQQAEAFY…CVEMPSTAGV (159 aa). Positions 1809-2121 constitute an Enoyl reductase (ER) domain; the sequence is GMLNTLCFQA…DNRHHGKITL (313 aa). In terms of domain architecture, Ketoreductase (KR) spans 2146-2323; the sequence is TYLIAGGLGG…AVTIDLGIVK (178 aa). The Carrier domain maps to 2433–2510; that stretch reads DAVLFVTGAV…SFARDLVGKG (78 aa). At Ser2470 the chain carries O-(pantetheine 4'-phosphoryl)serine.

Requires pantetheine 4'-phosphate as cofactor.

The protein operates within secondary metabolite biosynthesis. Functionally, partially reducing polyketide synthase; part of the gene cluster that mediates the biosynthesis of polyesters containing 2,4-dihydroxy-6-(2-hydroxypropyl)benzoate and 3-hydroxybutyrate moieties, such as talapolyester G, 15G256beta and 15G256beta-2; as well as to oxidized derivatives such as 15G256alpha. The biosynthesis of the polyesters probably starts with the formation of the diketide 3-hydroxybutyryl-S-ACP catalyzed by the partially reducing polyketide synthase tpeA. The acceptance of 3-hydroxybutyryl by the non-reducing polyketide synthase tpeB would initiate further elongation and cyclization, catalyzed by KS and PT, respectively, to form 2,4-dihydroxy-6-(2-hydroxyn-propyl)benzoyl-S-ACP intermediate. The TE domain could catalyze lactonization at this step to yield 6-hydroxymellein as a derailment product. The polyesterification process maybe occurs when additional molecules of 3-hydroxybutyryl are transferred to tpeB. Following the first esterification step, an intramolecular cyclization catalyzed by the TE domain of tpeB would give talarodioxadione 1, whereas the ethyl esterification of talapolyester G perhaps happens spontaneously. Further oxidation by the cytochrome P450 monooxygenase tpeC then leads to the formation of oxidized derivatives. This chain is Partially reducing polyketide synthase tpeA, found in Talaromyces stipitatus (strain ATCC 10500 / CBS 375.48 / QM 6759 / NRRL 1006) (Penicillium stipitatum).